The sequence spans 408 residues: Arylacetamide deacetylase-like 3 (408 aa).

Transmembrane regions (helical) follow at residues 2 to 22 (VVLA…GSLL), 46 to 66 (ILSC…KLGL), and 109 to 129 (SSIP…IGSL). The Involved in the stabilization of the negatively charged intermediate by the formation of the oxyanion hole motif lies at 120–122 (HGG). Residue S194 is part of the active site. Residue N321 is glycosylated (N-linked (GlcNAc...) asparagine). Active-site residues include D348 and H378.

It belongs to the 'GDXG' lipolytic enzyme family.

It is found in the membrane. In Mus musculus (Mouse), this protein is Arylacetamide deacetylase-like 3 (Aadacl3).